The sequence spans 137 residues: Putative transcriptional regulatory protein MJ0173 (137 aa).

This sequence belongs to the Tfx family.

Its function is as follows. Putative transcriptional regulator. This is Putative transcriptional regulatory protein MJ0173 from Methanocaldococcus jannaschii (strain ATCC 43067 / DSM 2661 / JAL-1 / JCM 10045 / NBRC 100440) (Methanococcus jannaschii).